We begin with the raw amino-acid sequence, 424 residues long: Serine--tRNA ligase (424 aa).

232 to 234 contributes to the L-serine binding site; that stretch reads TAE. Position 263-265 (263-265) interacts with ATP; that stretch reads RKE. Position 286 (glutamate 286) interacts with L-serine. 350-353 contacts ATP; that stretch reads EISS. Serine 386 is an L-serine binding site.

The protein belongs to the class-II aminoacyl-tRNA synthetase family. Type-1 seryl-tRNA synthetase subfamily. In terms of assembly, homodimer. The tRNA molecule binds across the dimer.

It is found in the cytoplasm. It carries out the reaction tRNA(Ser) + L-serine + ATP = L-seryl-tRNA(Ser) + AMP + diphosphate + H(+). The catalysed reaction is tRNA(Sec) + L-serine + ATP = L-seryl-tRNA(Sec) + AMP + diphosphate + H(+). It functions in the pathway aminoacyl-tRNA biosynthesis; selenocysteinyl-tRNA(Sec) biosynthesis; L-seryl-tRNA(Sec) from L-serine and tRNA(Sec): step 1/1. Its function is as follows. Catalyzes the attachment of serine to tRNA(Ser). Is also able to aminoacylate tRNA(Sec) with serine, to form the misacylated tRNA L-seryl-tRNA(Sec), which will be further converted into selenocysteinyl-tRNA(Sec). The polypeptide is Serine--tRNA ligase (Thermodesulfovibrio yellowstonii (strain ATCC 51303 / DSM 11347 / YP87)).